A 215-amino-acid chain; its full sequence is Nascent polypeptide-associated complex subunit alpha (215 aa).

A disordered region spans residues 1 to 81; it reads MPGEATETVP…SEKKARKAMS (81 aa). Positions 9 to 28 are enriched in polar residues; the sequence is VPATEQELPQPQAETGSGTE. Residues 29-42 are compositionally biased toward acidic residues; that stretch reads SDSDESVPELEEQD. S43 is subject to Phosphoserine; by ILK1. The span at 44–57 shows a compositional bias: low complexity; that stretch reads TQATTQQAQLAAAA. The segment at 69 to 80 is required for DNA-binding; that stretch reads QSRSEKKARKAM. Positions 70 to 135 constitute an NAC-A/B domain; it reads SRSEKKARKA…AKIEDLSQQA (66 aa). Residues 93 to 108 form an RNA/DNA-binding region; the sequence is RVTIRKSKNILFVITK. A Phosphoserine modification is found at S132. An N6-acetyllysine; alternate modification is found at K142. A Glycyl lysine isopeptide (Lys-Gly) (interchain with G-Cter in SUMO2); alternate cross-link involves residue K142. Position 159 is a phosphothreonine; by GSK3-beta (T159). T161 carries the phosphothreonine modification. Residues S166, S186, S191, and S203 each carry the phosphoserine modification. Residues 176–213 enclose the UBA domain; the sequence is VEVKDIELVMSQANVSRAKAVRALKNNSNDIVNAIMEL.

This sequence belongs to the NAC-alpha family. Interacts with TBP and JUN. Part of the nascent polypeptide-associated complex (NAC), which is a heterodimer of NACA and BTF3 (via NAC-A/B domains). NAC associates with ribosomes through the BTF3/NACB subunit and contacts the ribosomal protein L23, which is positioned near the exiting site. Both subunits can contact nascent polypeptide chains. NACA may also form homodimers, and only this form binds DNA. Post-translationally, phosphorylation of Thr-159 by GSK3B may promote proteasome mediated degradation. Phosphorylation of Ser-43 by ILK during cell adhesion may promote nuclear localization. As to expression, ubiquitously expressed.

It is found in the cytoplasm. The protein resides in the nucleus. Prevents inappropriate targeting of non-secretory polypeptides to the endoplasmic reticulum (ER). Binds to nascent polypeptide chains as they emerge from the ribosome and blocks their interaction with the signal recognition particle (SRP), which normally targets nascent secretory peptides to the ER. Also reduces the inherent affinity of ribosomes for protein translocation sites in the ER membrane (M sites). May act as a specific coactivator for JUN, binding to DNA and stabilizing the interaction of JUN homodimers with target gene promoters. In Homo sapiens (Human), this protein is Nascent polypeptide-associated complex subunit alpha (NACA).